The primary structure comprises 476 residues: Hyaluronidase-2 (476 aa).

Residues 1–20 (MWTGLGPAVTLALVLVVAWA) form the signal peptide. Cystine bridges form between C47/C343 and C214/C230. 2 N-linked (GlcNAc...) asparagine glycosylation sites follow: N77 and N106. E138 (proton donor) is an active-site residue. 2 N-linked (GlcNAc...) asparagine glycosylation sites follow: N340 and N360. The EGF-like domain maps to 364–442 (AAQYCSWAQC…YLGWGGEQCQ (79 aa)). 3 disulfide bridges follow: C368-C379, C373-C430, and C432-C441. G451 carries GPI-anchor amidated glycine lipidation. Residues 452–476 (ASGAWAGSHLTGLLAVAVLAFTWTS) constitute a propeptide, removed in mature form.

The protein belongs to the glycosyl hydrolase 56 family. As to quaternary structure, interacts with MST1R. In terms of assembly, (Microbial infection) Interacts with Jaagsiekte sheep retrovirus (JSRV) envelope proteins.

It localises to the cell membrane. The catalysed reaction is Random hydrolysis of (1-&gt;4)-linkages between N-acetyl-beta-D-glucosamine and D-glucuronate residues in hyaluronate.. In terms of biological role, catalyzes hyaluronan degradation into small fragments that are endocytosed and degraded in lysosomes by HYAL1 and exoglycosidases. Essential for the breakdown of extracellular matrix hyaluronan. The sequence is that of Hyaluronidase-2 (HYAL2) from Ovis aries (Sheep).